The sequence spans 305 residues: Glycine--tRNA ligase alpha subunit (305 aa).

This sequence belongs to the class-II aminoacyl-tRNA synthetase family. As to quaternary structure, tetramer of two alpha and two beta subunits.

It is found in the cytoplasm. The catalysed reaction is tRNA(Gly) + glycine + ATP = glycyl-tRNA(Gly) + AMP + diphosphate. The sequence is that of Glycine--tRNA ligase alpha subunit from Streptococcus suis (strain 05ZYH33).